The chain runs to 361 residues: Phosphoserine aminotransferase (361 aa).

Arg-42 lines the L-glutamate pocket. Pyridoxal 5'-phosphate contacts are provided by residues 76–77, Trp-102, Thr-152, Asp-172, and Gln-195; that span reads AT. Residue Lys-196 is modified to N6-(pyridoxal phosphate)lysine. 237-238 is a pyridoxal 5'-phosphate binding site; it reads NT.

Belongs to the class-V pyridoxal-phosphate-dependent aminotransferase family. SerC subfamily. In terms of assembly, homodimer. Requires pyridoxal 5'-phosphate as cofactor.

It localises to the cytoplasm. It catalyses the reaction O-phospho-L-serine + 2-oxoglutarate = 3-phosphooxypyruvate + L-glutamate. It carries out the reaction 4-(phosphooxy)-L-threonine + 2-oxoglutarate = (R)-3-hydroxy-2-oxo-4-phosphooxybutanoate + L-glutamate. Its pathway is amino-acid biosynthesis; L-serine biosynthesis; L-serine from 3-phospho-D-glycerate: step 2/3. It functions in the pathway cofactor biosynthesis; pyridoxine 5'-phosphate biosynthesis; pyridoxine 5'-phosphate from D-erythrose 4-phosphate: step 3/5. Catalyzes the reversible conversion of 3-phosphohydroxypyruvate to phosphoserine and of 3-hydroxy-2-oxo-4-phosphonooxybutanoate to phosphohydroxythreonine. The protein is Phosphoserine aminotransferase of Xanthomonas axonopodis pv. citri (strain 306).